Reading from the N-terminus, the 38-residue chain is Antifungal protein 5 (38 aa).

This sequence belongs to the plant LTP family.

In terms of biological role, possesses potent antifungal activity against F.graminearum but not P.infestans. The chain is Antifungal protein 5 from Malva parviflora (Little mallow).